We begin with the raw amino-acid sequence, 323 residues long: Protein translocase subunit SecF (323 aa).

At 1-22 the chain is on the cytoplasmic side; it reads MAQEYTVEQLNHGRKVYDFMRW. A helical transmembrane segment spans residues 23 to 43; the sequence is DYWAFGISGLLLIAAIVIMGV. Over 44–142 the chain is Periplasmic; it reads RGFNWGLDFT…FVGPSVGADL (99 aa). Residues 143-163 form a helical membrane-spanning segment; sequence AQTGAMALMAALLSILVYVGF. Over 164-170 the chain is Cytoplasmic; that stretch reads RFEWRLA. The helical transmembrane segment at 171 to 191 threads the bilayer; that stretch reads AGVVIALAHDVIITLGILSLF. Topologically, residues 192-196 are periplasmic; that stretch reads HIEID. The chain crosses the membrane as a helical span at residues 197–217; it reads LTIVASLMSVIGYSLNDSIVV. The Cytoplasmic portion of the chain corresponds to 218 to 247; the sequence is SDRIRENFRKIRRGTPYEIFNVSLTQTLHR. A helical membrane pass occupies residues 248-270; that stretch reads TLITSGTTLMVILMLYLFGGPVL. The Periplasmic segment spans residues 271 to 280; sequence EGFSLTMLIG. The chain crosses the membrane as a helical span at residues 281–301; it reads VSIGTASSIYVASALALKLGM. Over 302–323 the chain is Cytoplasmic; that stretch reads KREHMLQQKVEKEGADQPSILP.

Belongs to the SecD/SecF family. SecF subfamily. Forms a complex with SecD. Part of the essential Sec protein translocation apparatus which comprises SecA, SecYEG and auxiliary proteins SecDF-YajC and YidC.

It localises to the cell inner membrane. Functionally, part of the Sec protein translocase complex. Interacts with the SecYEG preprotein conducting channel. SecDF uses the proton motive force (PMF) to complete protein translocation after the ATP-dependent function of SecA. The sequence is that of Protein translocase subunit SecF from Escherichia coli O157:H7.